A 218-amino-acid polypeptide reads, in one-letter code: Small ribosomal subunit protein uS3c (218 aa).

The 72-residue stretch at 47–118 (IQKTIKISSG…KLNIAITRIA (72 aa)) folds into the KH type-2 domain.

This sequence belongs to the universal ribosomal protein uS3 family. Part of the 30S ribosomal subunit.

The protein resides in the plastid. Its subcellular location is the chloroplast. This Lotus japonicus (Lotus corniculatus var. japonicus) protein is Small ribosomal subunit protein uS3c (rps3).